We begin with the raw amino-acid sequence, 236 residues long: Biosynthetic peptidoglycan transglycosylase (236 aa).

Residues 12 to 31 (ALLWFAAGSVLVVLVLRWVP) form a helical membrane-spanning segment.

This sequence belongs to the glycosyltransferase 51 family.

Its subcellular location is the cell inner membrane. It carries out the reaction [GlcNAc-(1-&gt;4)-Mur2Ac(oyl-L-Ala-gamma-D-Glu-L-Lys-D-Ala-D-Ala)](n)-di-trans,octa-cis-undecaprenyl diphosphate + beta-D-GlcNAc-(1-&gt;4)-Mur2Ac(oyl-L-Ala-gamma-D-Glu-L-Lys-D-Ala-D-Ala)-di-trans,octa-cis-undecaprenyl diphosphate = [GlcNAc-(1-&gt;4)-Mur2Ac(oyl-L-Ala-gamma-D-Glu-L-Lys-D-Ala-D-Ala)](n+1)-di-trans,octa-cis-undecaprenyl diphosphate + di-trans,octa-cis-undecaprenyl diphosphate + H(+). It functions in the pathway cell wall biogenesis; peptidoglycan biosynthesis. In terms of biological role, peptidoglycan polymerase that catalyzes glycan chain elongation from lipid-linked precursors. The polypeptide is Biosynthetic peptidoglycan transglycosylase (Pseudomonas syringae pv. syringae (strain B728a)).